The sequence spans 446 residues: tRNA-2-methylthio-N(6)-dimethylallyladenosine synthase (446 aa).

In terms of domain architecture, MTTase N-terminal spans 3–124 (KKLYIKTYGC…LPELISKVVR (122 aa)). 6 residues coordinate [4Fe-4S] cluster: C12, C48, C87, C162, C166, and C169. The 233-residue stretch at 148–380 (YPQGASSFIS…QKELAAQQLA (233 aa)) folds into the Radical SAM core domain. Positions 383-446 (ESCIGSTMKV…LNSLSGEIYR (64 aa)) constitute a TRAM domain.

Belongs to the methylthiotransferase family. MiaB subfamily. In terms of assembly, monomer. [4Fe-4S] cluster serves as cofactor.

The protein localises to the cytoplasm. The catalysed reaction is N(6)-dimethylallyladenosine(37) in tRNA + (sulfur carrier)-SH + AH2 + 2 S-adenosyl-L-methionine = 2-methylsulfanyl-N(6)-dimethylallyladenosine(37) in tRNA + (sulfur carrier)-H + 5'-deoxyadenosine + L-methionine + A + S-adenosyl-L-homocysteine + 2 H(+). Catalyzes the methylthiolation of N6-(dimethylallyl)adenosine (i(6)A), leading to the formation of 2-methylthio-N6-(dimethylallyl)adenosine (ms(2)i(6)A) at position 37 in tRNAs that read codons beginning with uridine. This is tRNA-2-methylthio-N(6)-dimethylallyladenosine synthase from Rickettsia bellii (strain OSU 85-389).